Here is a 726-residue protein sequence, read N- to C-terminus: Probable dipeptidyl-peptidase 5 (726 aa).

A signal peptide spans 1 to 19 (MAAAKWLIASLAFASSGLA). N-linked (GlcNAc...) asparagine glycans are attached at residues asparagine 96 and asparagine 252. Positions 269–291 (AEPINKRNGPRTPQGIEGASSSP) are disordered. Serine 558 serves as the catalytic Charge relay system. A glycan (N-linked (GlcNAc...) asparagine) is linked at asparagine 605. Active-site charge relay system residues include aspartate 641 and histidine 673. Asparagine 699 is a glycosylation site (N-linked (GlcNAc...) asparagine).

The protein belongs to the peptidase S9C family.

The protein localises to the secreted. Extracellular dipeptidyl-peptidase which removes N-terminal dipeptides sequentially from polypeptides having unsubstituted N-termini. Contributes to pathogenicity. The chain is Probable dipeptidyl-peptidase 5 (DPP5) from Trichophyton verrucosum (strain HKI 0517).